Here is a 256-residue protein sequence, read N- to C-terminus: Isoprenyl transferase (256 aa).

Asp33 is a catalytic residue. Mg(2+) is bound at residue Asp33. Substrate contacts are provided by residues 34 to 37 (GNGR), Trp38, Arg46, His50, and 78 to 80 (STE). The active-site Proton acceptor is Asn81. Substrate-binding positions include Trp82, Arg84, Arg201, and 207 to 209 (RIS). Glu220 lines the Mg(2+) pocket.

It belongs to the UPP synthase family. Homodimer. Requires Mg(2+) as cofactor.

Functionally, catalyzes the condensation of isopentenyl diphosphate (IPP) with allylic pyrophosphates generating different type of terpenoids. The polypeptide is Isoprenyl transferase (Staphylococcus aureus (strain Mu50 / ATCC 700699)).